A 153-amino-acid chain; its full sequence is UPF0260 protein YcgN (153 aa).

Belongs to the UPF0260 family.

This Shigella flexneri serotype 5b (strain 8401) protein is UPF0260 protein YcgN.